Consider the following 93-residue polypeptide: Large ribosomal subunit protein bL27 (93 aa).

Positions 1–10 (MRFLLGLQYF) are excised as a propeptide. The interval 14–36 (KGVGSTKNGRDSESKRLGAKKSD) is disordered. The span at 21–36 (NGRDSESKRLGAKKSD) shows a compositional bias: basic and acidic residues.

This sequence belongs to the bacterial ribosomal protein bL27 family. In terms of processing, the N-terminus is cleaved by ribosomal processing cysteine protease Prp.

This chain is Large ribosomal subunit protein bL27, found in Mycoplasma capricolum subsp. capricolum (strain California kid / ATCC 27343 / NCTC 10154).